Reading from the N-terminus, the 171-residue chain is uncharacterized protein (171 aa).

This is an uncharacterized protein from Saccharomyces cerevisiae (strain ATCC 204508 / S288c) (Baker's yeast).